Reading from the N-terminus, the 314-residue chain is Lipoyl synthase (314 aa).

Residues cysteine 40, cysteine 45, cysteine 51, cysteine 67, cysteine 71, cysteine 74, and serine 280 each coordinate [4Fe-4S] cluster. Residues 53–269 form the Radical SAM core domain; that stretch reads SERKTATFMI…KNIALEKGFS (217 aa).

The protein belongs to the radical SAM superfamily. Lipoyl synthase family. It depends on [4Fe-4S] cluster as a cofactor.

Its subcellular location is the cytoplasm. It catalyses the reaction [[Fe-S] cluster scaffold protein carrying a second [4Fe-4S](2+) cluster] + N(6)-octanoyl-L-lysyl-[protein] + 2 oxidized [2Fe-2S]-[ferredoxin] + 2 S-adenosyl-L-methionine + 4 H(+) = [[Fe-S] cluster scaffold protein] + N(6)-[(R)-dihydrolipoyl]-L-lysyl-[protein] + 4 Fe(3+) + 2 hydrogen sulfide + 2 5'-deoxyadenosine + 2 L-methionine + 2 reduced [2Fe-2S]-[ferredoxin]. Its pathway is protein modification; protein lipoylation via endogenous pathway; protein N(6)-(lipoyl)lysine from octanoyl-[acyl-carrier-protein]. In terms of biological role, catalyzes the radical-mediated insertion of two sulfur atoms into the C-6 and C-8 positions of the octanoyl moiety bound to the lipoyl domains of lipoate-dependent enzymes, thereby converting the octanoylated domains into lipoylated derivatives. This chain is Lipoyl synthase, found in Oceanobacillus iheyensis (strain DSM 14371 / CIP 107618 / JCM 11309 / KCTC 3954 / HTE831).